The primary structure comprises 63 residues: Large ribosomal subunit protein uL30 (63 aa).

It belongs to the universal ribosomal protein uL30 family. In terms of assembly, part of the 50S ribosomal subunit.

In Rickettsia felis (strain ATCC VR-1525 / URRWXCal2) (Rickettsia azadi), this protein is Large ribosomal subunit protein uL30.